A 315-amino-acid polypeptide reads, in one-letter code: PIH1 domain-containing protein 2 (315 aa).

This sequence belongs to the PIH1 family.

The protein is PIH1 domain-containing protein 2 (PIH1D2) of Bos taurus (Bovine).